The primary structure comprises 107 residues: Integration host factor subunit alpha (107 aa).

It belongs to the bacterial histone-like protein family. As to quaternary structure, heterodimer of an alpha and a beta chain.

In terms of biological role, this protein is one of the two subunits of integration host factor, a specific DNA-binding protein that functions in genetic recombination as well as in transcriptional and translational control. This Brucella suis (strain ATCC 23445 / NCTC 10510) protein is Integration host factor subunit alpha.